Here is a 199-residue protein sequence, read N- to C-terminus: NAD(P)H dehydrogenase (quinone) (199 aa).

One can recognise a Flavodoxin-like domain in the interval 4 to 190; it reads VLVLYYSAYG…AGARYQGKTI (187 aa). Residues 10–15 and 78–80 contribute to the FMN site; these read SAYGHI and TRF. Tyr-12 serves as a coordination point for NAD(+). Trp-98 provides a ligand contact to substrate. Residues 113–119 and His-134 contribute to the FMN site; that span reads STATQHG.

This sequence belongs to the WrbA family. FMN serves as cofactor.

It catalyses the reaction a quinone + NADH + H(+) = a quinol + NAD(+). The enzyme catalyses a quinone + NADPH + H(+) = a quinol + NADP(+). The protein is NAD(P)H dehydrogenase (quinone) of Rhodopseudomonas palustris (strain TIE-1).